Reading from the N-terminus, the 176-residue chain is dCTP deaminase (176 aa).

DCTP-binding positions include 99 to 104 (RSTLAR) and D115. The Proton donor/acceptor role is filled by E125. A dCTP-binding site is contributed by Q163.

This sequence belongs to the dCTP deaminase family. Homotrimer.

The catalysed reaction is dCTP + H2O + H(+) = dUTP + NH4(+). The protein operates within pyrimidine metabolism; dUMP biosynthesis; dUMP from dCTP (dUTP route): step 1/2. In terms of biological role, catalyzes the deamination of dCTP to dUTP. This Pyrobaculum neutrophilum (strain DSM 2338 / JCM 9278 / NBRC 100436 / V24Sta) (Thermoproteus neutrophilus) protein is dCTP deaminase.